The primary structure comprises 301 residues: Glycine--tRNA ligase alpha subunit (301 aa).

The protein belongs to the class-II aminoacyl-tRNA synthetase family. Tetramer of two alpha and two beta subunits.

The protein resides in the cytoplasm. The catalysed reaction is tRNA(Gly) + glycine + ATP = glycyl-tRNA(Gly) + AMP + diphosphate. This Campylobacter hominis (strain ATCC BAA-381 / DSM 21671 / CCUG 45161 / LMG 19568 / NCTC 13146 / CH001A) protein is Glycine--tRNA ligase alpha subunit.